We begin with the raw amino-acid sequence, 223 residues long: MWSQFIAILSQSMPIGVCRKYPVCQTHLKKLKVADLSQESKDSEMAAMTEYISSNRPWGQGSYPSNGYVSPVSGCTLHFGNVSTLHPDSAALDGRLREMAEVLGVQDYASAPVRVSSTGYIDKVKAMVYEIDGVESMSMADLMGCTQLHQLAGKVASDIQSGAINHREFAGEILSNMVGPLRELLPKEDCDSIVSILEKVRDGEAVSADEVFPIITKFQEAGF.

This is an uncharacterized protein from Dryophytes versicolor (chameleon treefrog).